The sequence spans 315 residues: DNA-directed RNA polymerase subunit alpha (315 aa).

An alpha N-terminal domain (alpha-NTD) region spans residues 1–228 (MLEIEKPKIE…EHFKLFMTLT (228 aa)). Positions 245-315 (KEKVLEMTIE…LELGLKQSEE (71 aa)) are alpha C-terminal domain (alpha-CTD).

The protein belongs to the RNA polymerase alpha chain family. In terms of assembly, homodimer. The RNAP catalytic core consists of 2 alpha, 1 beta, 1 beta' and 1 omega subunit. When a sigma factor is associated with the core the holoenzyme is formed, which can initiate transcription.

It carries out the reaction RNA(n) + a ribonucleoside 5'-triphosphate = RNA(n+1) + diphosphate. DNA-dependent RNA polymerase catalyzes the transcription of DNA into RNA using the four ribonucleoside triphosphates as substrates. This is DNA-directed RNA polymerase subunit alpha from Clostridium tetani (strain Massachusetts / E88).